The following is a 262-amino-acid chain: Lectin (262 aa).

A signal peptide spans 1-21; that stretch reads MASSVLLVLSLFLVLLLTQAS. N-linked (GlcNAc...) asparagine glycosylation is found at N53, N82, N100, N129, and N205.

This sequence belongs to the leguminous lectin family.

Functionally, this metalloglycoprotein, containing Ca(2+), Mn(2+), binds glycoconjugates containing terminal non-reducing alpha-D-GalNAc residues. This is Lectin from Phaseolus lunatus (Lima bean).